Here is a 416-residue protein sequence, read N- to C-terminus: Serine hydroxymethyltransferase 1 (416 aa).

(6S)-5,6,7,8-tetrahydrofolate is bound by residues Leu121 and 125–127 (GHL). An N6-(pyridoxal phosphate)lysine modification is found at Lys229. Residues Glu245 and 354–356 (SPF) each bind (6S)-5,6,7,8-tetrahydrofolate.

Belongs to the SHMT family. Homodimer. Pyridoxal 5'-phosphate is required as a cofactor.

The protein resides in the cytoplasm. It catalyses the reaction (6R)-5,10-methylene-5,6,7,8-tetrahydrofolate + glycine + H2O = (6S)-5,6,7,8-tetrahydrofolate + L-serine. Its pathway is one-carbon metabolism; tetrahydrofolate interconversion. It functions in the pathway amino-acid biosynthesis; glycine biosynthesis; glycine from L-serine: step 1/1. In terms of biological role, catalyzes the reversible interconversion of serine and glycine with tetrahydrofolate (THF) serving as the one-carbon carrier. This reaction serves as the major source of one-carbon groups required for the biosynthesis of purines, thymidylate, methionine, and other important biomolecules. Also exhibits THF-independent aldolase activity toward beta-hydroxyamino acids, producing glycine and aldehydes, via a retro-aldol mechanism. This is Serine hydroxymethyltransferase 1 from Vibrio vulnificus (strain CMCP6).